The following is a 301-amino-acid chain: Heme A synthase (301 aa).

The Cytoplasmic portion of the chain corresponds to 1-5 (MHKKL). A helical membrane pass occupies residues 6–26 (AFFSGFVTLGMMLVLIMGGTV). The Extracellular portion of the chain corresponds to 27–62 (TKTDSGDGCGTDWPLCHGKLIPTNPSVETMIEYSHR). A disulfide bridge connects residues cysteine 35 and cysteine 42. Residue glutamate 58 is part of the active site. Histidine 61 is a heme o binding site. Residues 63-83 (VVSGIEGLLIIALAIWTFIAV) traverse the membrane as a helical segment. The Cytoplasmic segment spans residues 84-90 (KHRVDVK). A helical transmembrane segment spans residues 91-111 (IFAFLAFIFMLIQSIIGAGAV). At 112-121 (IWQQSDAILA) the chain is on the extracellular side. Residues 122 to 142 (LHFGISLVSFASLLILTILLF) form a helical membrane-spanning segment. Residue histidine 123 coordinates heme o. The Cytoplasmic segment spans residues 143–158 (EGDREHQVVSRRLRSH). Residues 159 to 179 (LYGLSIYTMIVVYTGAYVRHL) form a helical membrane-spanning segment. The Extracellular portion of the chain corresponds to 180–203 (GATYACVGWPICEQEVWTFESYVQ). An intrachain disulfide couples cysteine 185 to cysteine 191. The helical transmembrane segment at 204 to 224 (MGHRVMAGLLVLYTLYVLYLA) threads the bilayer. Residue histidine 206 participates in heme b binding. Residues 225-234 (RKEMNRLIER) lie on the Cytoplasmic side of the membrane. Residues 235-255 (GMMASLFFILLQVGTGAWIVL) form a helical membrane-spanning segment. At 256-259 (GGHA) the chain is on the extracellular side. Residues 260–280 (TYVPLLHAFLITCYFGILSYL) form a helical membrane-spanning segment. Histidine 266 provides a ligand contact to heme b. At 281-301 (SYHAYRSTARQDGAQLKNMNG) the chain is on the cytoplasmic side.

Belongs to the COX15/CtaA family. Type 1 subfamily. As to quaternary structure, interacts with CtaB. The cofactor is heme b.

It localises to the cell membrane. It catalyses the reaction Fe(II)-heme o + 2 A + H2O = Fe(II)-heme a + 2 AH2. It functions in the pathway porphyrin-containing compound metabolism; heme A biosynthesis; heme A from heme O: step 1/1. Catalyzes the conversion of heme O to heme A by two successive hydroxylations of the methyl group at C8. The first hydroxylation forms heme I, the second hydroxylation results in an unstable dihydroxymethyl group, which spontaneously dehydrates, resulting in the formyl group of heme A. This is Heme A synthase from Exiguobacterium sp. (strain ATCC BAA-1283 / AT1b).